A 452-amino-acid chain; its full sequence is tRNA-2-methylthio-N(6)-dimethylallyladenosine synthase (452 aa).

The MTTase N-terminal domain maps to 3–118 (KKVFIKTYGC…LPQLLAERER (116 aa)). Positions 12, 49, 81, 155, 159, and 162 each coordinate [4Fe-4S] cluster. Residues 141–379 (RVEGASAFVS…QTVINDSIKR (239 aa)) enclose the Radical SAM core domain. One can recognise a TRAM domain in the interval 382–445 (ESRLGTVQRI…SFTLRGEVVT (64 aa)).

This sequence belongs to the methylthiotransferase family. MiaB subfamily. Monomer. It depends on [4Fe-4S] cluster as a cofactor.

It is found in the cytoplasm. The catalysed reaction is N(6)-dimethylallyladenosine(37) in tRNA + (sulfur carrier)-SH + AH2 + 2 S-adenosyl-L-methionine = 2-methylsulfanyl-N(6)-dimethylallyladenosine(37) in tRNA + (sulfur carrier)-H + 5'-deoxyadenosine + L-methionine + A + S-adenosyl-L-homocysteine + 2 H(+). Its function is as follows. Catalyzes the methylthiolation of N6-(dimethylallyl)adenosine (i(6)A), leading to the formation of 2-methylthio-N6-(dimethylallyl)adenosine (ms(2)i(6)A) at position 37 in tRNAs that read codons beginning with uridine. This chain is tRNA-2-methylthio-N(6)-dimethylallyladenosine synthase, found in Albidiferax ferrireducens (strain ATCC BAA-621 / DSM 15236 / T118) (Rhodoferax ferrireducens).